Here is a 569-residue protein sequence, read N- to C-terminus: Interleukin-1 receptor type 1 (569 aa).

The signal sequence occupies residues 1-17 (MKVLLRLICFIALLISS). Residues 18-336 (LEADKCKERE…LIYPVTNFQK (319 aa)) lie on the Extracellular side of the membrane. 4 cysteine pairs are disulfide-bonded: Cys-23–Cys-104, Cys-44–Cys-96, Cys-121–Cys-164, and Cys-142–Cys-196. Ig-like C2-type domains follow at residues 23 to 110 (CKER…IKIS), 118 to 210 (PNLC…YPIT), and 226 to 328 (PVIV…IQLI). Asn-100 carries N-linked (GlcNAc...) asparagine glycosylation. N-linked (GlcNAc...) asparagine glycans are attached at residues Asn-193, Asn-233, Asn-249, Asn-263, and Asn-297. Cys-248 and Cys-312 form a disulfide bridge. A helical membrane pass occupies residues 337–356 (HMIGICVTLTVIIVCSVFIY). The Cytoplasmic portion of the chain corresponds to 357–569 (KIFKIDIVLW…LQREAHVPLG (213 aa)). The 156-residue stretch at 383–538 (KTYDAYILYP…RFWKNVRYHM (156 aa)) folds into the TIR domain. Residue Glu-470 is part of the active site. Phosphotyrosine is present on Tyr-496. Residues 540 to 569 (VQRRSPSSKHQLLSPATKEKLQREAHVPLG) are disordered. A compositionally biased stretch (basic and acidic residues) spans 556-569 (TKEKLQREAHVPLG).

Belongs to the interleukin-1 receptor family. The interleukin-1 receptor complex is a heterodimer of IL1R1 and IL1RAP. Interacts with PIK3R1. Interacts with IL1A. A soluble form (sIL1R1) is probably produced by proteolytic cleavage at the cell surface (shedding). Post-translationally, rapidly phosphorylated on Tyr-496 in response to IL-1, which creates a SH2 binding site for the PI 3-kinase regulatory subunit PIK3R1. In terms of tissue distribution, expressed in T-helper cell subsets. Preferentially expressed in T-helper 1 (Th1) cells.

It is found in the membrane. The protein localises to the cell membrane. The protein resides in the secreted. The enzyme catalyses NAD(+) + H2O = ADP-D-ribose + nicotinamide + H(+). Its function is as follows. Receptor for IL1A, IL1B and IL1RN. After binding to interleukin-1 associates with the coreceptor IL1RAP to form the high affinity interleukin-1 receptor complex which mediates interleukin-1-dependent activation of NF-kappa-B, MAPK and other pathways. Signaling involves the recruitment of adapter molecules such as TOLLIP, MYD88, and IRAK1 or IRAK2 via the respective TIR domains of the receptor/coreceptor subunits. Binds ligands with comparable affinity and binding of antagonist IL1RN prevents association with IL1RAP to form a signaling complex. Involved in IL1B-mediated costimulation of IFNG production from T-helper 1 (Th1) cells. This Homo sapiens (Human) protein is Interleukin-1 receptor type 1 (IL1R1).